The sequence spans 513 residues: Maturase K (513 aa).

This sequence belongs to the intron maturase 2 family. MatK subfamily.

It is found in the plastid. Its subcellular location is the chloroplast. In terms of biological role, usually encoded in the trnK tRNA gene intron. Probably assists in splicing its own and other chloroplast group II introns. In Molinia caerulea (Purple moor-grass), this protein is Maturase K.